We begin with the raw amino-acid sequence, 444 residues long: Porin AaxA (444 aa).

Positions 1–19 are cleaved as a signal peptide; that stretch reads MAFSRFYLLTALYTGGILA. Positions 42-68 are disordered; it reads KNSTQDSDSSPSESSPHPRQEPRRHVL. Low complexity predominate over residues 46–56; sequence QDSDSSPSESS.

Belongs to the OprB family.

The protein resides in the cell outer membrane. Functionally, facilitates L-arginine uptake, as part of the AaxABC system. The arginine uptake by the bacterium in the macrophage may be a virulence factor against the host innate immune response. This Chlamydia felis (strain Fe/C-56) (Chlamydophila felis) protein is Porin AaxA (aaxA).